Reading from the N-terminus, the 611-residue chain is Endo-1,4-beta-xylanase A (611 aa).

An N-terminal signal peptide occupies residues Met-1–Ala-26. The 102-residue stretch at Gln-27–Ser-128 folds into the CBM2 domain. 3 cysteine pairs are disulfide-bonded: Cys-31/Cys-125, Cys-184/Cys-215, and Cys-194/Cys-209. The region spanning Gln-183–Arg-212 is the CBM10 domain. Positions Ser-281–Ala-607 constitute a GH10 domain. The active-site Proton donor is the Glu-391. The active-site Nucleophile is the Glu-510.

Belongs to the glycosyl hydrolase 10 (cellulase F) family.

The catalysed reaction is Endohydrolysis of (1-&gt;4)-beta-D-xylosidic linkages in xylans.. It functions in the pathway glycan degradation; xylan degradation. In Cellvibrio japonicus (strain Ueda107) (Pseudomonas fluorescens subsp. cellulosa), this protein is Endo-1,4-beta-xylanase A (xynA).